A 76-amino-acid chain; its full sequence is Protein TraJ (76 aa).

The protein resides in the cytoplasm. Functionally, this protein is essential for positively regulating the expression of transfer genes that are involved in the conjugal transfer of DNA between bacterial cells. The protein is Protein TraJ (traJ) of Escherichia coli.